Here is a 360-residue protein sequence, read N- to C-terminus: Phenylalanine--tRNA ligase alpha subunit (360 aa).

E260 lines the Mg(2+) pocket.

This sequence belongs to the class-II aminoacyl-tRNA synthetase family. Phe-tRNA synthetase alpha subunit type 1 subfamily. In terms of assembly, tetramer of two alpha and two beta subunits. It depends on Mg(2+) as a cofactor.

Its subcellular location is the cytoplasm. The catalysed reaction is tRNA(Phe) + L-phenylalanine + ATP = L-phenylalanyl-tRNA(Phe) + AMP + diphosphate + H(+). In Bartonella tribocorum (strain CIP 105476 / IBS 506), this protein is Phenylalanine--tRNA ligase alpha subunit.